The following is a 227-amino-acid chain: Large ribosomal subunit protein uL3 (227 aa).

Residues 129–154 (GMQPVSHGQSDRTRSRGSSGAQGPQK) form a disordered region.

It belongs to the universal ribosomal protein uL3 family. In terms of assembly, part of the 50S ribosomal subunit. Forms a cluster with proteins L14 and L19.

Functionally, one of the primary rRNA binding proteins, it binds directly near the 3'-end of the 23S rRNA, where it nucleates assembly of the 50S subunit. The protein is Large ribosomal subunit protein uL3 of Endomicrobium trichonymphae.